The following is a 478-amino-acid chain: Major facilitator superfamily domain-containing protein 12 (478 aa).

An N-acetylmethionine modification is found at Met1. Residues 1 to 26 lie on the Cytoplasmic side of the membrane; it reads MVPGSPAAGAGPAPRALSLAARLSYA. Residues 27–47 traverse the membrane as a helical segment; sequence VGHFLNDLCASMWFTYLLLYL. Over 48 to 56 the chain is Lumenal; that stretch reads HSVRAYSSR. The helical transmembrane segment at 57–77 threads the bilayer; the sequence is GAGLLLLLGQVADGLCTPLVG. At 78–97 the chain is on the cytoplasmic side; that stretch reads YEADRAAGRCARCGPRKAWH. Residues 98–118 form a helical membrane-spanning segment; it reads LVGTVCVLLSFPFIFSPCLGC. Residues 119–124 lie on the Lumenal side of the membrane; that stretch reads GAATPE. Residues 125-145 form a helical membrane-spanning segment; that stretch reads WAALLYYGPFIVVFQFGWAAT. Over 146 to 168 the chain is Cytoplasmic; that stretch reads QIAHLSLIPELVTSDHEKVELTA. A helical transmembrane segment spans residues 169 to 189; it reads LRYAFTVVANITVFGAAWLLL. The Lumenal portion of the chain corresponds to 190–216; the sequence is RLQGSAREGPPDEAGDHLGVQDVPVFR. Residues 217 to 237 form a helical membrane-spanning segment; it reads TLSLCVVGVGAVFSLLFHLGT. Residues 238–277 are Cytoplasmic-facing; sequence RERRRPPAQEPDERSPLLAPATARPLLLWKHWLREPSFYQ. A helical transmembrane segment spans residues 278-300; sequence VGLLYMSTRLIVNLSQTYIAMYL. Residues 301-308 lie on the Lumenal side of the membrane; it reads TYSLNLPK. A helical membrane pass occupies residues 309–329; it reads KFIATIPLVMYVSGFCSSFLM. Residues 330–338 lie on the Cytoplasmic side of the membrane; it reads KPVNKCIGR. A helical membrane pass occupies residues 339–359; it reads NMTYFVGLLVILAFAAWVVLV. Residues 360–361 lie on the Lumenal side of the membrane; sequence DE. The helical transmembrane segment at 362 to 382 threads the bilayer; the sequence is LGMAVYVAAVLLGGGCATILV. At 383–400 the chain is on the cytoplasmic side; sequence TSLAMTADLIGPHTHSGA. Residues 401-421 traverse the membrane as a helical segment; that stretch reads FVYGAMSFSDKVANGLAVMVI. Over 422–436 the chain is Lumenal; it reads QSLHPCSLELCCRAC. A helical transmembrane segment spans residues 437-457; sequence VGFYHWVMVAVTGGVGVAATL. Residues 458–478 are Cytoplasmic-facing; sequence SLCSLLVWPIRLRSWDPGAQP.

It belongs to the major facilitator superfamily.

It localises to the melanosome membrane. It is found in the lysosome membrane. It catalyses the reaction L-cysteine(in) = L-cysteine(out). In terms of biological role, transporter that mediates the import of cysteine into melanosomes, thereby regulating skin/hair pigmentation. In melanosomes, cysteine import is required both for normal levels of cystine, the oxidized dimer of cysteine, and provide cysteine for the production of the cysteinyldopas used in pheomelanin synthesis, thereby regulating skin/hair pigmentation. Also catalyzes import of cysteine into lysosomes in non-pigmented cells, regulating lysosomal cystine and cysteine storage, which is essnetial for redox homeostasis. This is Major facilitator superfamily domain-containing protein 12 from Equus caballus (Horse).